The sequence spans 653 residues: Transcription factor Ken 1 (653 aa).

Residues Thr35 to Ser103 enclose the BTB domain. 4 disordered regions span residues Asn126 to Arg215, Asn234 to Ala305, Leu429 to Ala451, and Glu512 to Ser534. Over residues Asn145–Val157 the composition is skewed to polar residues. The span at Gly251–Ser272 shows a compositional bias: basic residues. Positions Ser286–Asp299 are enriched in polar residues. Residues Ser430 to Asn444 are compositionally biased toward low complexity. Over residues Ala520–Ser534 the composition is skewed to gly residues. C2H2-type zinc fingers lie at residues Tyr555 to His577, Phe583 to His606, and Tyr619 to His641.

Its subcellular location is the nucleus. Functionally, transcription factor required for terminalia development. Negative regulator of the JAK/STAT pathway: represses JAK/STAT-dependent expression of ventral veins lacking (vvl) in the posterior spiracles. The sequence is that of Transcription factor Ken 1 from Culex quinquefasciatus (Southern house mosquito).